A 330-amino-acid polypeptide reads, in one-letter code: Mas-related G-protein coupled receptor member X2 (330 aa).

At 1–33 (MDPTTLVWGTESTTMNGNDQALPLLCGKETLIL) the chain is on the extracellular side. The helical transmembrane segment at 34-54 (VVLILFIALVGLVGNAFVLWL) threads the bilayer. At 55–63 (LGFRMRRNA) the chain is on the cytoplasmic side. The chain crosses the membrane as a helical span at residues 64–84 (FSVYVLSLAGADFLFLCFPMI). Topologically, residues 85 to 96 (NCLAYLINFFHS) are extracellular. A helical membrane pass occupies residues 97–117 (ISINFPSFFTTVMTCAYLAGL). The Cytoplasmic portion of the chain corresponds to 118-144 (SMLSAISTERCLSVLWPIWYRSRRPRH). A helical transmembrane segment spans residues 145 to 165 (LSAVMCVLLWALSLLLSILEG). The Extracellular portion of the chain corresponds to 166–184 (KFCGFLFSDGDSGWCQTFD). A helical membrane pass occupies residues 185-205 (FITAAWLMFLFVVLCGSSLAL). At 206-228 (LVRILCGSRGLPLTRLYLTILLT) the chain is on the cytoplasmic side. A helical membrane pass occupies residues 229-249 (VLIFLLCGLPFGIQWFLILWI). The Extracellular portion of the chain corresponds to 250-264 (WKNSDVLFCHIHPVS). The chain crosses the membrane as a helical span at residues 265-285 (VVLSSFNSSANPIIYFFVGSF). Topologically, residues 286-330 (RKQWRLRQPVLKLALQRALQDTAEVDHSEGCFSQGTLEMSGSSLV) are cytoplasmic.

Belongs to the G-protein coupled receptor 1 family. Mas subfamily.

It is found in the cell membrane. Functionally, mast cell-specific receptor for basic secretagogues, i.e. cationic amphiphilic drugs, as well as endo- or exogenous peptides, consisting of a basic head group and a hydrophobic core. Recognizes and binds small molecules containing a cyclized tetrahydroisoquinoline (THIQ), such as non-steroidal neuromuscular blocking drugs (NMBDs), including tubocurarine and atracurium. In response to these compounds, mediates pseudo-allergic reactions characterized by histamine release, inflammation and airway contraction. The polypeptide is Mas-related G-protein coupled receptor member X2 (MRGPRX2) (Trachypithecus francoisi (Francois' leaf monkey)).